The following is a 299-amino-acid chain: Protoheme IX farnesyltransferase (299 aa).

The next 8 helical transmembrane spans lie at 24–44 (VVAL…DQGM), 46–66 (WNAL…AAAI), 94–114 (VHAL…LAWG), 118–138 (LTAW…TLFL), 146–166 (IVLG…SVTG), 172–192 (ALLL…ALAV), 232–252 (LPFI…ALGV), and 278–298 (ITYL…PVTL).

It belongs to the UbiA prenyltransferase family. Protoheme IX farnesyltransferase subfamily.

It is found in the cell inner membrane. The enzyme catalyses heme b + (2E,6E)-farnesyl diphosphate + H2O = Fe(II)-heme o + diphosphate. It participates in porphyrin-containing compound metabolism; heme O biosynthesis; heme O from protoheme: step 1/1. In terms of biological role, converts heme B (protoheme IX) to heme O by substitution of the vinyl group on carbon 2 of heme B porphyrin ring with a hydroxyethyl farnesyl side group. In Hahella chejuensis (strain KCTC 2396), this protein is Protoheme IX farnesyltransferase.